Consider the following 418-residue polypeptide: Light-independent protochlorophyllide reductase subunit N (418 aa).

Residues cysteine 17, cysteine 42, and cysteine 103 each coordinate [4Fe-4S] cluster.

The protein belongs to the BchN/ChlN family. Protochlorophyllide reductase is composed of three subunits; ChlL, ChlN and ChlB. Forms a heterotetramer of two ChlB and two ChlN subunits. The cofactor is [4Fe-4S] cluster.

The enzyme catalyses chlorophyllide a + oxidized 2[4Fe-4S]-[ferredoxin] + 2 ADP + 2 phosphate = protochlorophyllide a + reduced 2[4Fe-4S]-[ferredoxin] + 2 ATP + 2 H2O. The protein operates within porphyrin-containing compound metabolism; chlorophyll biosynthesis (light-independent). Its function is as follows. Component of the dark-operative protochlorophyllide reductase (DPOR) that uses Mg-ATP and reduced ferredoxin to reduce ring D of protochlorophyllide (Pchlide) to form chlorophyllide a (Chlide). This reaction is light-independent. The NB-protein (ChlN-ChlB) is the catalytic component of the complex. The protein is Light-independent protochlorophyllide reductase subunit N of Prochlorococcus marinus (strain MIT 9313).